Consider the following 425-residue polypeptide: UPF0229 protein YE2273 (425 aa).

The disordered stretch occupies residues 84–110 (TNDRIERPQGGGGGSGSGQGNAGQDGE). Residues 92–108 (QGGGGGSGSGQGNAGQD) are compositionally biased toward gly residues.

The protein belongs to the UPF0229 family.

This is UPF0229 protein YE2273 from Yersinia enterocolitica serotype O:8 / biotype 1B (strain NCTC 13174 / 8081).